The primary structure comprises 147 residues: MVHLTPDEKAAVTALWGKVNVDEVGGEALGRLLVVYPWTQRFFESFGDLSSPDAVMGNPKVKAHGKKVLGAFSDGLAHLDNLKGTFAQLSELHCDKLHVDPENFKLLGNVLVCVLAHHFGKEFTPQVQAAYQKVVAGVANALAHKYH.

Valine 2 carries the N-acetylvaline modification. The 145-residue stretch at 3 to 147 (HLTPDEKAAV…VANALAHKYH (145 aa)) folds into the Globin domain. Threonine 13 is subject to Phosphothreonine. At serine 45 the chain carries Phosphoserine. Lysine 60 is subject to N6-acetyllysine. Histidine 64 contributes to the heme b binding site. Lysine 83 carries the N6-acetyllysine modification. Histidine 93 is a heme b binding site. Cysteine 94 bears the S-nitrosocysteine mark. Lysine 145 bears the N6-acetyllysine mark.

It belongs to the globin family. Heterotetramer of two alpha chains and two beta chains. As to expression, red blood cells.

Functionally, involved in oxygen transport from the lung to the various peripheral tissues. In Colobus polykomos (Western black-and-white colobus monkey), this protein is Hemoglobin subunit beta (HBB).